A 416-amino-acid chain; its full sequence is Probable glucan 1,3-beta-glucosidase A (416 aa).

A signal peptide spans 1-21 (MLYNLSKAVLALSVLAASADA). Glutamate 209 (proton donor) is an active-site residue. 2 disulfide bridges follow: cysteine 290/cysteine 415 and cysteine 316/cysteine 341. Catalysis depends on glutamate 308, which acts as the Nucleophile.

This sequence belongs to the glycosyl hydrolase 5 (cellulase A) family. Monomer. Mn(2+) serves as cofactor.

It localises to the secreted. It catalyses the reaction Successive hydrolysis of beta-D-glucose units from the non-reducing ends of (1-&gt;3)-beta-D-glucans, releasing alpha-glucose.. Beta-glucanases participate in the metabolism of beta-glucan, the main structural component of the cell wall. It could also function biosynthetically as a transglycosylase. The sequence is that of Probable glucan 1,3-beta-glucosidase A (exgA) from Aspergillus terreus (strain NIH 2624 / FGSC A1156).